Consider the following 314-residue polypeptide: uncharacterized protein (314 aa).

A disordered region spans residues 1-70 (MAGNSQRRGA…QGRHKKTDDT (70 aa)). Basic residues predominate over residues 43-65 (QRPHHPAGKRAAKAARQAQGRHK). S-adenosyl-L-methionine contacts are provided by Gly265, Ile285, and Leu294.

This sequence belongs to the class IV-like SAM-binding methyltransferase superfamily. RNA methyltransferase TrmH family.

This is an uncharacterized protein from Mycolicibacterium vanbaalenii (strain DSM 7251 / JCM 13017 / BCRC 16820 / KCTC 9966 / NRRL B-24157 / PYR-1) (Mycobacterium vanbaalenii).